The chain runs to 801 residues: PR domain zinc finger protein 4 (801 aa).

Positions 412 to 529 (KQLVLRQSIV…PENELLFYYS (118 aa)) constitute an SET domain. The C2H2-type 1; atypical zinc-finger motif lies at 545–566 (HLCNCGKECNSYTEFKAHLTSH). 4 C2H2-type zinc fingers span residues 618-640 (HKCD…LKIH), 646-668 (YRCT…MVIH), 674-696 (LKCD…VLIH), and 702-724 (IKCP…LNSH). The C2H2-type 6; atypical zinc finger occupies 730–752 (YVCEKCTKAYLTKYHLTRHLKTC). Residues 751 to 782 (TCKGPTSSSSAPEEEEEDDSEEEDLADSVGTE) form a disordered region. Over residues 762-776 (PEEEEEDDSEEEDLA) the composition is skewed to acidic residues.

It belongs to the class V-like SAM-binding methyltransferase superfamily. As to expression, expressed in many tissues. Highly expressed in ovary, testis, pancreas, brain, heart and prostate.

The protein localises to the nucleus. May function as a transcription factor involved in cell differentiation. This is PR domain zinc finger protein 4 (PRDM4) from Homo sapiens (Human).